The following is a 440-amino-acid chain: Histidinol dehydrogenase (440 aa).

NAD(+)-binding residues include Tyr133, Gln194, and Asn217. Substrate contacts are provided by Ser240, Gln262, and His265. Zn(2+) is bound by residues Gln262 and His265. Active-site proton acceptor residues include Glu330 and His331. Substrate-binding residues include His331, Asp364, Glu418, and His423. Residue Asp364 coordinates Zn(2+). Zn(2+) is bound at residue His423.

The protein belongs to the histidinol dehydrogenase family. The cofactor is Zn(2+).

The catalysed reaction is L-histidinol + 2 NAD(+) + H2O = L-histidine + 2 NADH + 3 H(+). It functions in the pathway amino-acid biosynthesis; L-histidine biosynthesis; L-histidine from 5-phospho-alpha-D-ribose 1-diphosphate: step 9/9. Its function is as follows. Catalyzes the sequential NAD-dependent oxidations of L-histidinol to L-histidinaldehyde and then to L-histidine. This is Histidinol dehydrogenase from Nitrosospira multiformis (strain ATCC 25196 / NCIMB 11849 / C 71).